Consider the following 63-residue polypeptide: Large ribosomal subunit protein uL30 (63 aa).

The protein belongs to the universal ribosomal protein uL30 family. In terms of assembly, part of the 50S ribosomal subunit.

The sequence is that of Large ribosomal subunit protein uL30 from Rickettsia massiliae (strain Mtu5).